A 101-amino-acid polypeptide reads, in one-letter code: Urease subunit beta (101 aa).

It belongs to the urease beta subunit family. Heterotrimer of UreA (gamma), UreB (beta) and UreC (alpha) subunits. Three heterotrimers associate to form the active enzyme.

Its subcellular location is the cytoplasm. It carries out the reaction urea + 2 H2O + H(+) = hydrogencarbonate + 2 NH4(+). It functions in the pathway nitrogen metabolism; urea degradation; CO(2) and NH(3) from urea (urease route): step 1/1. This Ruegeria sp. (strain TM1040) (Silicibacter sp.) protein is Urease subunit beta.